Consider the following 105-residue polypeptide: Putative membrane protein insertion efficiency factor (105 aa).

Residues 68 to 105 (FHPGGLDPVPPRRNESGTEISDARPGSDGEASPGAPGL) are disordered. The span at 77 to 94 (PPRRNESGTEISDARPGS) shows a compositional bias: basic and acidic residues.

Belongs to the UPF0161 family.

It is found in the cell membrane. Could be involved in insertion of integral membrane proteins into the membrane. This is Putative membrane protein insertion efficiency factor from Thermobifida fusca (strain YX).